The sequence spans 431 residues: DNA polymerase delta subunit 3 (431 aa).

The tract at residues 64–80 (QGSDSGEDLYSVVLESR) is necessary for function, possibly resulting from its inability to interact with PolD2. Residues 128–431 (PGAGKIVPSA…AGIMNFFSKK (304 aa)) are disordered. Residues 156–171 (SKSAVKLEPSKSSLKS) are compositionally biased toward low complexity. Basic and acidic residues-rich tracts occupy residues 172-200 (EPAK…EQAS) and 252-271 (SPPE…NKKE). Over residues 278–290 (PSPTKKPTTANTS) the composition is skewed to low complexity. Residues 294-307 (FDEESAESSDEEEK) are compositionally biased toward acidic residues. Basic and acidic residues-rich tracts occupy residues 308–328 (LDML…EKAS) and 343–362 (QPPK…KMDT). Over residues 387–411 (PANKKVSPKAAAPVNKKKSPPSAAK) the composition is skewed to low complexity.

As to quaternary structure, component of both the DNA polymerase delta and DNA polymerase zeta complexes. The DNA polymerase delta complex consists of three subunits: the catalytic subunit PolD1 and two accessory subunits PolD2/Pol31 and PolD3/Pol32. Within the delta complex, interacts with both PolD1 and PolD2. Component of the DNA polymerase zeta complex consisting of four subunits: the catalytic subunit PolZ1 and three accessory subunits PolZ2/Rev7, PolD2/Pol31 and PolD3/Pol32. As to expression, expressed in ovaries (at the protein level). Expressed in ovaries.

Its subcellular location is the nucleus. The protein resides in the nucleoplasm. In terms of biological role, accessory component of the DNA polymerase delta complex and possibly the DNA polymerase zeta complex. As a component of the delta complex, participates in high fidelity genome replication, including lagging strand synthesis, DNA recombination and repair. Required to recruit the DNA polymerase delta complex to the nucleus of rapidly dividing embryonic cells, and as a consequence is essential for genome replication during the earliest cell cycles. Increases the efficiency and processivity of DNA synthesis of the DNA polymerases during mitotic DNA replication and repair. During development this function is essential for preventing replication stress that results in the formation of chromosomal fragile sites (CFS) such as chromosomal breaks. Ensures genomic stability by promoting several types of DNA repair mechanisms including repairing broken dicentric chromosomes through homolog-dependent break-induced replication (BIR). During homologous recombination (HR) repair, required for maintaining the processivity of the delta complex during break-induced replication; a form of HR that requires extensive DNA synthesis such as the repair of large gaps. Able to suppress position effect variegation and may therefore have a role in the induction of chromatin state changes that likely include its activities in DNA replication and repair. The chain is DNA polymerase delta subunit 3 from Drosophila melanogaster (Fruit fly).